The following is a 117-amino-acid chain: G antigen 12I (117 aa).

The tract at residues 1-117 (MSWRGRSTYY…PEEGEKQSQC (117 aa)) is disordered. Composition is skewed to acidic residues over residues 32–45 (FSDE…EEGE) and 87–96 (ECEDGPDGQE). Residues 103–117 (EEVKTPEEGEKQSQC) show a composition bias toward basic and acidic residues.

It belongs to the GAGE family. In terms of assembly, forms tetramers.

The protein is G antigen 12I (GAGE12I) of Homo sapiens (Human).